Consider the following 763-residue polypeptide: Xaa-Pro dipeptidyl-peptidase (763 aa).

Residues serine 348, aspartate 468, and histidine 498 each act as charge relay system in the active site.

Belongs to the peptidase S15 family. As to quaternary structure, homodimer.

It is found in the cytoplasm. The catalysed reaction is Hydrolyzes Xaa-Pro-|- bonds to release unblocked, N-terminal dipeptides from substrates including Ala-Pro-|-p-nitroanilide and (sequentially) Tyr-Pro-|-Phe-Pro-|-Gly-Pro-|-Ile.. Its function is as follows. Removes N-terminal dipeptides sequentially from polypeptides having unsubstituted N-termini provided that the penultimate residue is proline. This chain is Xaa-Pro dipeptidyl-peptidase (pepX), found in Lactococcus lactis subsp. lactis (strain IL1403) (Streptococcus lactis).